The chain runs to 592 residues: Aspartate--tRNA ligase (592 aa).

An L-aspartate-binding site is contributed by glutamate 173. The segment at 197-200 (QLFK) is aspartate. Position 219 (arginine 219) interacts with L-aspartate. Residues 219 to 221 (RDE) and glutamine 228 contribute to the ATP site. Residue histidine 448 participates in L-aspartate binding. Glutamate 482 contacts ATP. Residue arginine 489 participates in L-aspartate binding. 534–537 (GLDR) provides a ligand contact to ATP.

It belongs to the class-II aminoacyl-tRNA synthetase family. Type 1 subfamily. In terms of assembly, homodimer.

It localises to the cytoplasm. The enzyme catalyses tRNA(Asp) + L-aspartate + ATP = L-aspartyl-tRNA(Asp) + AMP + diphosphate. In terms of biological role, catalyzes the attachment of L-aspartate to tRNA(Asp) in a two-step reaction: L-aspartate is first activated by ATP to form Asp-AMP and then transferred to the acceptor end of tRNA(Asp). This is Aspartate--tRNA ligase from Shewanella baltica (strain OS223).